Consider the following 286-residue polypeptide: Tungstate-binding protein TupA (286 aa).

Positions 1–20 are cleaved as a signal peptide; the sequence is MKRLLSIITAVMMLALALTG. Cys-21 carries the N-palmitoyl cysteine lipid modification. Cys-21 carries S-diacylglycerol cysteine lipidation.

Monomer. The complex is composed of two ATP-binding proteins (TupC), two transmembrane proteins (TupB) and a solute-binding protein (TupA).

The protein resides in the cell membrane. Functionally, part of an ABC transporter complex involved in tungstate uptake. Specifically binds tungstate. This chain is Tungstate-binding protein TupA, found in Peptoclostridium acidaminophilum (Eubacterium acidaminophilum).